The sequence spans 41 residues: uncharacterized protein (41 aa).

A helical transmembrane segment spans residues L10–L32.

It is found in the cell inner membrane. This is an uncharacterized protein from Escherichia coli (strain K12).